Reading from the N-terminus, the 245-residue chain is uncharacterized protein (245 aa).

The next 6 membrane-spanning stretches (helical) occupy residues 38–58 (IYPA…AIFI), 68–88 (TIEL…QGYF), 100–120 (IWSL…LILA), 129–149 (VLFI…FVSA), 194–214 (VNNI…FLMN), and 217–237 (IAFI…LIIH).

Belongs to the acyltransferase 3 family.

Its subcellular location is the cell membrane. This is an uncharacterized protein from Haemophilus influenzae (strain ATCC 51907 / DSM 11121 / KW20 / Rd).